Here is a 287-residue protein sequence, read N- to C-terminus: Elongation factor Ts (287 aa).

Positions 81-84 are involved in Mg(2+) ion dislocation from EF-Tu; the sequence is TDFV.

Belongs to the EF-Ts family.

The protein localises to the cytoplasm. Its function is as follows. Associates with the EF-Tu.GDP complex and induces the exchange of GDP to GTP. It remains bound to the aminoacyl-tRNA.EF-Tu.GTP complex up to the GTP hydrolysis stage on the ribosome. The chain is Elongation factor Ts from Nitratidesulfovibrio vulgaris (strain ATCC 29579 / DSM 644 / CCUG 34227 / NCIMB 8303 / VKM B-1760 / Hildenborough) (Desulfovibrio vulgaris).